The chain runs to 421 residues: ATP-dependent RNA helicase RhlB (421 aa).

The short motif at 9 to 37 (QKFSDFALHPAVIEALEKKGFHNCTPIQA) is the Q motif element. Residues 40 to 219 (LPLTLEGRDV…FEQMNNAEYV (180 aa)) form the Helicase ATP-binding domain. 53–60 (AQTGTGKT) provides a ligand contact to ATP. The short motif at 165 to 168 (DEAD) is the DEAD box element. The region spanning 245–390 (RLLQTLLEEE…VSKYNPDALM (146 aa)) is the Helicase C-terminal domain. Residues 396-421 (PLRLTRARPGNGPRRNGPPRNRRRSG) form a disordered region. Low complexity predominate over residues 403–414 (RPGNGPRRNGPP).

This sequence belongs to the DEAD box helicase family. RhlB subfamily. As to quaternary structure, component of the RNA degradosome, which is a multiprotein complex involved in RNA processing and mRNA degradation.

It is found in the cytoplasm. The catalysed reaction is ATP + H2O = ADP + phosphate + H(+). In terms of biological role, DEAD-box RNA helicase involved in RNA degradation. Has RNA-dependent ATPase activity and unwinds double-stranded RNA. This chain is ATP-dependent RNA helicase RhlB, found in Klebsiella pneumoniae (strain 342).